A 118-amino-acid polypeptide reads, in one-letter code: UPF0102 protein Bcav_2532 (118 aa).

The protein belongs to the UPF0102 family.

This chain is UPF0102 protein Bcav_2532, found in Beutenbergia cavernae (strain ATCC BAA-8 / DSM 12333 / CCUG 43141 / JCM 11478 / NBRC 16432 / NCIMB 13614 / HKI 0122).